A 291-amino-acid polypeptide reads, in one-letter code: MAITAALVKELRDKTGAGMMDAKKALTETDGDMEAAVDWLRTKGLAKAAKKSGRTAAEGLVGVAVADGAAVAVEVNSETDFVAKNAEFQAMVASFAEAALSASDLDALKGTEVGGKTVETILTDKIATIGENMTLRRMEKLSGETVVSYVHNAAADGMGKIGVLVALTGADNGIGKQIAMHIAAANPASLSEADLDPAVVEKERQVQIDIARESGKPEQVIEKMIVGRMKKFLSEVTLLGQAFVVNPDLTVGDAAKEAGVEITGFVRMEVGEGIEKVEEDFAAEVAKTMNG.

The tract at residues 79–82 is involved in Mg(2+) ion dislocation from EF-Tu; the sequence is TDFV.

The protein belongs to the EF-Ts family.

The protein resides in the cytoplasm. In terms of biological role, associates with the EF-Tu.GDP complex and induces the exchange of GDP to GTP. It remains bound to the aminoacyl-tRNA.EF-Tu.GTP complex up to the GTP hydrolysis stage on the ribosome. The sequence is that of Elongation factor Ts from Dinoroseobacter shibae (strain DSM 16493 / NCIMB 14021 / DFL 12).